A 299-amino-acid polypeptide reads, in one-letter code: Phosphatidylserine decarboxylase proenzyme (299 aa).

Active-site charge relay system; for autoendoproteolytic cleavage activity residues include D90, H147, and S254. S254 functions as the Schiff-base intermediate with substrate; via pyruvic acid; for decarboxylase activity in the catalytic mechanism. S254 is subject to Pyruvic acid (Ser); by autocatalysis.

The protein belongs to the phosphatidylserine decarboxylase family. PSD-B subfamily. Prokaryotic type I sub-subfamily. As to quaternary structure, heterodimer of a large membrane-associated beta subunit and a small pyruvoyl-containing alpha subunit. Pyruvate serves as cofactor. In terms of processing, is synthesized initially as an inactive proenzyme. Formation of the active enzyme involves a self-maturation process in which the active site pyruvoyl group is generated from an internal serine residue via an autocatalytic post-translational modification. Two non-identical subunits are generated from the proenzyme in this reaction, and the pyruvate is formed at the N-terminus of the alpha chain, which is derived from the carboxyl end of the proenzyme. The autoendoproteolytic cleavage occurs by a canonical serine protease mechanism, in which the side chain hydroxyl group of the serine supplies its oxygen atom to form the C-terminus of the beta chain, while the remainder of the serine residue undergoes an oxidative deamination to produce ammonia and the pyruvoyl prosthetic group on the alpha chain. During this reaction, the Ser that is part of the protease active site of the proenzyme becomes the pyruvoyl prosthetic group, which constitutes an essential element of the active site of the mature decarboxylase.

The protein localises to the cell membrane. The catalysed reaction is a 1,2-diacyl-sn-glycero-3-phospho-L-serine + H(+) = a 1,2-diacyl-sn-glycero-3-phosphoethanolamine + CO2. Its pathway is phospholipid metabolism; phosphatidylethanolamine biosynthesis; phosphatidylethanolamine from CDP-diacylglycerol: step 2/2. Catalyzes the formation of phosphatidylethanolamine (PtdEtn) from phosphatidylserine (PtdSer). The polypeptide is Phosphatidylserine decarboxylase proenzyme (Erwinia tasmaniensis (strain DSM 17950 / CFBP 7177 / CIP 109463 / NCPPB 4357 / Et1/99)).